An 875-amino-acid polypeptide reads, in one-letter code: Serine/threonine-protein kinase D2 (875 aa).

The tract at residues methionine 1–proline 33 is disordered. Positions serine 14–glycine 24 are enriched in pro residues. Phosphoserine is present on residues serine 26 and serine 30. A Phosphotyrosine modification is found at tyrosine 87. A Phorbol-ester/DAG-type 1 zinc finger spans residues proline 138–cysteine 188. Residues serine 197, serine 198, serine 200, serine 203, serine 206, serine 211, serine 212, and serine 214 each carry the phosphoserine modification. A disordered region spans residues arginine 224–tyrosine 247. A compositionally biased stretch (low complexity) spans serine 236 to serine 245. Serine 244 carries the post-translational modification Phosphoserine; by CSNK1D and CSNK1E. A Phosphoserine modification is found at serine 245. The Phorbol-ester/DAG-type 2 zinc-finger motif lies at proline 265 to cysteine 315. A PH domain is found at threonine 398 to methionine 510. Position 408 is a phosphotyrosine (tyrosine 408). Tyrosine 439 is subject to Phosphotyrosine; by ABL1. The residue at position 519 (serine 519) is a Phosphoserine. The Protein kinase domain occupies isoleucine 552–leucine 808. ATP contacts are provided by residues leucine 558 to valine 566 and lysine 581. The active-site Proton acceptor is aspartate 675. At serine 707 the chain carries Phosphoserine; by PKC. Serine 711 is subject to Phosphoserine. The residue at position 718 (tyrosine 718) is a Phosphotyrosine; by ABL1. An Important for ABL1-mediated Tyr-718 phosphorylation motif is present at residues leucine 725–glutamine 727. Residue serine 873 is modified to Phosphoserine; by autocatalysis.

The protein belongs to the protein kinase superfamily. CAMK Ser/Thr protein kinase family. PKD subfamily. In terms of assembly, interacts (via C-terminus) with LCK. Interacts (via N-terminus and zing-finger domain 1 and 2) with PRKCD in response to oxidative stress; the interaction is independent of PRKD2 tyrosine phosphorylation. The cofactor is Mg(2+). Post-translationally, phosphorylation of Ser-873 correlates with the activation status of the kinase. Ser-707 is probably phosphorylated by PKC. Phosphorylation at Ser-244 by CSNK1D and CSNK1E promotes nuclear localization and substrate targeting. Phosphorylation at Ser-244, Ser-707 and Ser-711 is required for nuclear localization. Phosphorylated at Tyr-438 by ABL1 in response to oxidative stress. Phosphorylated at Tyr-718 by ABL1 specifically in response to oxidative stress; requires prior phosphorylation at Ser-707 or/and Ser-711.

The protein resides in the cytoplasm. The protein localises to the cell membrane. It is found in the golgi apparatus. Its subcellular location is the trans-Golgi network. The catalysed reaction is L-seryl-[protein] + ATP = O-phospho-L-seryl-[protein] + ADP + H(+). It carries out the reaction L-threonyl-[protein] + ATP = O-phospho-L-threonyl-[protein] + ADP + H(+). Activated by DAG and phorbol esters. Phorbol-ester/DAG-type domains bind DAG, mediating translocation to membranes. Autophosphorylation of Ser-711 and phosphorylation of Ser-707 by PKC relieves auto-inhibition by the PH domain. Catalytic activity is further increased by phosphorylation at Tyr-718 in response to oxidative stress. Serine/threonine-protein kinase that converts transient diacylglycerol (DAG) signals into prolonged physiological effects downstream of PKC, and is involved in the regulation of cell proliferation via MAPK1/3 (ERK1/2) signaling, oxidative stress-induced NF-kappa-B activation, inhibition of HDAC7 transcriptional repression, signaling downstream of T-cell antigen receptor (TCR) and cytokine production, and plays a role in Golgi membrane trafficking, angiogenesis, secretory granule release and cell adhesion. May potentiate mitogenesis induced by the neuropeptide bombesin by mediating an increase in the duration of MAPK1/3 (ERK1/2) signaling, which leads to accumulation of immediate-early gene products including FOS that stimulate cell cycle progression. In response to oxidative stress, is phosphorylated at Tyr-438 and Tyr-718 by ABL1, which leads to the activation of PRKD2 without increasing its catalytic activity, and mediates activation of NF-kappa-B. In response to the activation of the gastrin receptor CCKBR, is phosphorylated at Ser-244 by CSNK1D and CSNK1E, translocates to the nucleus, phosphorylates HDAC7, leading to nuclear export of HDAC7 and inhibition of HDAC7 transcriptional repression of NR4A1/NUR77. Upon TCR stimulation, is activated independently of ZAP70, translocates from the cytoplasm to the nucleus and is required for interleukin-2 (IL2) promoter up-regulation. During adaptive immune responses, is required in peripheral T-lymphocytes for the production of the effector cytokines IL2 and IFNG after TCR engagement and for optimal induction of antibody responses to antigens. In epithelial cells stimulated with lysophosphatidic acid (LPA), is activated through a PKC-dependent pathway and mediates LPA-stimulated interleukin-8 (IL8) secretion via a NF-kappa-B-dependent pathway. During TCR-induced T-cell activation, interacts with and is activated by the tyrosine kinase LCK, which results in the activation of the NFAT transcription factors. In the trans-Golgi network (TGN), regulates the fission of transport vesicles that are on their way to the plasma membrane and in polarized cells is involved in the transport of proteins from the TGN to the basolateral membrane. Plays an important role in endothelial cell proliferation and migration prior to angiogenesis, partly through modulation of the expression of KDR/VEGFR2 and FGFR1, two key growth factor receptors involved in angiogenesis. In secretory pathway, is required for the release of chromogranin-A (CHGA)-containing secretory granules from the TGN. Downstream of PRKCA, plays important roles in angiotensin-2-induced monocyte adhesion to endothelial cells. The chain is Serine/threonine-protein kinase D2 (Prkd2) from Rattus norvegicus (Rat).